Here is a 705-residue protein sequence, read N- to C-terminus: DNA ligase (705 aa).

NAD(+)-binding positions include 43-47, 92-93, and aspartate 123; these read DAEYD and SL. Lysine 125 serves as the catalytic N6-AMP-lysine intermediate. Arginine 146, glutamate 184, lysine 304, and lysine 328 together coordinate NAD(+). Zn(2+)-binding residues include cysteine 422, cysteine 425, cysteine 440, and cysteine 445. In terms of domain architecture, BRCT spans 607–696; that stretch reads TPVTPLAGKK…EEISGQAADD (90 aa). Residues 684 to 705 form a disordered region; sequence SESEEISGQAADDYENSLLRVQ.

This sequence belongs to the NAD-dependent DNA ligase family. LigA subfamily. The cofactor is Mg(2+). It depends on Mn(2+) as a cofactor.

The catalysed reaction is NAD(+) + (deoxyribonucleotide)n-3'-hydroxyl + 5'-phospho-(deoxyribonucleotide)m = (deoxyribonucleotide)n+m + AMP + beta-nicotinamide D-nucleotide.. In terms of biological role, DNA ligase that catalyzes the formation of phosphodiester linkages between 5'-phosphoryl and 3'-hydroxyl groups in double-stranded DNA using NAD as a coenzyme and as the energy source for the reaction. It is essential for DNA replication and repair of damaged DNA. The sequence is that of DNA ligase from Oleidesulfovibrio alaskensis (strain ATCC BAA-1058 / DSM 17464 / G20) (Desulfovibrio alaskensis).